The primary structure comprises 287 residues: Carbon monoxide dehydrogenase medium chain (287 aa).

In terms of domain architecture, FAD-binding PCMH-type spans 1 to 177 (MIPPRFEYHA…VEIRVPAFAQ (177 aa)). Residues 32–36 (AGGHS) and 111–115 (TIGGD) contribute to the FAD site.

As to quaternary structure, dimer of heterotrimers. Each heterotrimer consists of a large, a medium and a small subunit. FAD serves as cofactor.

The enzyme catalyses CO + a quinone + H2O = a quinol + CO2. Its function is as follows. Catalyzes the oxidation of carbon monoxide to carbon dioxide. The protein is Carbon monoxide dehydrogenase medium chain (cutM) of Hydrogenophaga pseudoflava (Pseudomonas carboxydoflava).